The chain runs to 916 residues: Beta-scruin (916 aa).

Kelch repeat units lie at residues 82 to 133 (AVLI…YFHG), 134 to 187 (KVYL…IMDE), 188 to 235 (RIFV…NNEG), 237 to 289 (IYVV…TQNK), 291 to 341 (IWIW…KAGT), and 342 to 390 (QVFI…GIPV). Residues 393–426 (SPASDITTSKTTRSGSRKTQKTLKDKQQSDIHAR) form a disordered region. The span at 414 to 425 (TLKDKQQSDIHA) shows a compositional bias: basic and acidic residues. Kelch repeat units follow at residues 586–637 (VIIA…YYRG), 638–691 (AIYV…VFND), 692–739 (SIYV…SHGG), 741–793 (LWVM…VCDD), 795–847 (IWLC…ALES), and 849–896 (LYLI…TIPP).

In terms of tissue distribution, sperm.

Its function is as follows. May have an enzymatic role. Found the acrosomal vesicle at the anterior of sperm but not in the acrosomal process. The polypeptide is Beta-scruin (Limulus polyphemus (Atlantic horseshoe crab)).